The sequence spans 100 residues: Urease subunit gamma (100 aa).

Belongs to the urease gamma subunit family. In terms of assembly, heterotrimer of UreA (gamma), UreB (beta) and UreC (alpha) subunits. Three heterotrimers associate to form the active enzyme.

The protein resides in the cytoplasm. The catalysed reaction is urea + 2 H2O + H(+) = hydrogencarbonate + 2 NH4(+). It functions in the pathway nitrogen metabolism; urea degradation; CO(2) and NH(3) from urea (urease route): step 1/1. The chain is Urease subunit gamma from Bacillus cereus (strain ATCC 10987 / NRS 248).